The chain runs to 260 residues: Hydroxyethylthiazole kinase 1 (260 aa).

Substrate is bound at residue Met39. ATP-binding residues include Arg115 and Thr160. Gly187 is a binding site for substrate.

This sequence belongs to the Thz kinase family. The cofactor is Mg(2+).

It carries out the reaction 5-(2-hydroxyethyl)-4-methylthiazole + ATP = 4-methyl-5-(2-phosphooxyethyl)-thiazole + ADP + H(+). The protein operates within cofactor biosynthesis; thiamine diphosphate biosynthesis; 4-methyl-5-(2-phosphoethyl)-thiazole from 5-(2-hydroxyethyl)-4-methylthiazole: step 1/1. Catalyzes the phosphorylation of the hydroxyl group of 4-methyl-5-beta-hydroxyethylthiazole (THZ). This Streptococcus pneumoniae (strain Taiwan19F-14) protein is Hydroxyethylthiazole kinase 1.